Consider the following 301-residue polypeptide: Probable serine acetyltransferase 3 (301 aa).

The segment at 280–301 is disordered; sequence IGKKAEPQRELPGVTMEQRWSD.

This sequence belongs to the transferase hexapeptide repeat family. In terms of assembly, homomultimer.

The enzyme catalyses L-serine + acetyl-CoA = O-acetyl-L-serine + CoA. It participates in amino-acid biosynthesis; L-cysteine biosynthesis; L-cysteine from L-serine: step 1/2. In Oryza sativa subsp. japonica (Rice), this protein is Probable serine acetyltransferase 3 (SAT3).